We begin with the raw amino-acid sequence, 252 residues long: Hydroxyacylglutathione hydrolase (252 aa).

Positions 54, 56, 58, 59, 111, 128, and 166 each coordinate Zn(2+).

Belongs to the metallo-beta-lactamase superfamily. Glyoxalase II family. As to quaternary structure, monomer. Zn(2+) serves as cofactor.

The enzyme catalyses an S-(2-hydroxyacyl)glutathione + H2O = a 2-hydroxy carboxylate + glutathione + H(+). Its pathway is secondary metabolite metabolism; methylglyoxal degradation; (R)-lactate from methylglyoxal: step 2/2. Thiolesterase that catalyzes the hydrolysis of S-D-lactoyl-glutathione to form glutathione and D-lactic acid. The chain is Hydroxyacylglutathione hydrolase from Aliivibrio fischeri (strain ATCC 700601 / ES114) (Vibrio fischeri).